Consider the following 619-residue polypeptide: Guanylate cyclase soluble subunit beta-1 (619 aa).

His-105 is a heme binding site. The Guanylate cyclase domain maps to Thr-421–Glu-554.

This sequence belongs to the adenylyl cyclase class-4/guanylyl cyclase family. In terms of assembly, the active enzyme is formed by a heterodimer of an alpha and a beta subunit. Homotetramer; dimer of dimers (in vitro). Heterodimer with GUCY1A1. Can also form inactive homodimers in vitro. It depends on heme as a cofactor. Lung and brain.

The protein localises to the cytoplasm. It catalyses the reaction GTP = 3',5'-cyclic GMP + diphosphate. With respect to regulation, activated by nitric oxide in the presence of magnesium or manganese ions. Its function is as follows. Mediates responses to nitric oxide (NO) by catalyzing the biosynthesis of the signaling molecule cGMP. This Rattus norvegicus (Rat) protein is Guanylate cyclase soluble subunit beta-1 (Gucy1b1).